Reading from the N-terminus, the 398-residue chain is 1-deoxy-D-xylulose 5-phosphate reductoisomerase (398 aa).

The NADPH site is built by threonine 11, glycine 12, serine 13, isoleucine 14, arginine 38, asparagine 39, and asparagine 125. A 1-deoxy-D-xylulose 5-phosphate-binding site is contributed by lysine 126. Residue glutamate 127 coordinates NADPH. Aspartate 151 serves as a coordination point for Mn(2+). Residues serine 152, glutamate 153, serine 179, and histidine 202 each coordinate 1-deoxy-D-xylulose 5-phosphate. Glutamate 153 serves as a coordination point for Mn(2+). Position 208 (glycine 208) interacts with NADPH. 1-deoxy-D-xylulose 5-phosphate is bound by residues serine 215, asparagine 220, lysine 221, and glutamate 224. Mn(2+) is bound at residue glutamate 224.

It belongs to the DXR family. The cofactor is Mg(2+). Requires Mn(2+) as cofactor.

It carries out the reaction 2-C-methyl-D-erythritol 4-phosphate + NADP(+) = 1-deoxy-D-xylulose 5-phosphate + NADPH + H(+). It functions in the pathway isoprenoid biosynthesis; isopentenyl diphosphate biosynthesis via DXP pathway; isopentenyl diphosphate from 1-deoxy-D-xylulose 5-phosphate: step 1/6. Functionally, catalyzes the NADPH-dependent rearrangement and reduction of 1-deoxy-D-xylulose-5-phosphate (DXP) to 2-C-methyl-D-erythritol 4-phosphate (MEP). The sequence is that of 1-deoxy-D-xylulose 5-phosphate reductoisomerase from Burkholderia multivorans (strain ATCC 17616 / 249).